Here is a 387-residue protein sequence, read N- to C-terminus: Alkanesulfonate monooxygenase (387 aa).

The protein belongs to the SsuD family.

It catalyses the reaction an alkanesulfonate + FMNH2 + O2 = an aldehyde + FMN + sulfite + H2O + 2 H(+). Functionally, catalyzes the desulfonation of aliphatic sulfonates. This is Alkanesulfonate monooxygenase from Cupriavidus metallidurans (strain ATCC 43123 / DSM 2839 / NBRC 102507 / CH34) (Ralstonia metallidurans).